Here is a 379-residue protein sequence, read N- to C-terminus: MNQAVIVAAKRTAFGKYGGTLKHLEPEQLLKPLFQHFKEKYPEVISKIDDVVLGNVVGNGGNIARKALLEAGLKDSIPGVTIDRQCGSGLESVQYACRMIQAGAGKVYIAGGVESTSRAPWKIKRPHSVYETALPEFYERASFAPEMSDPSMIQGAENVAKMYDVSRGLQDEFAYRSHQLTAENVKNGNISQEILPITVKGEIFNTDESLKSHIPKDNFGRFKPVIKGGTVTAANSCMKNDGAVLLLIMEKDMAYELGFEHGLLFKDGVTVGVDSNFPGIGPVPAISNLLKRNQLTIENIEVIEINEAFSAQVVACQQALNISNTQLNIWGGALASGHPYGASGAQLVTRLFYMFDKETMIASMGIGGGLGNAALFTRF.

The active-site Acyl-thioester intermediate is the Cys-86. His-338 serves as the catalytic Proton acceptor.

This sequence belongs to the thiolase-like superfamily. Thiolase family.

The protein is Putative acetyl-CoA C-acetyltransferase VraB (vraB) of Staphylococcus aureus (strain COL).